We begin with the raw amino-acid sequence, 496 residues long: Glycerol kinase (496 aa).

ADP is bound at residue Thr11. Positions 11, 12, and 13 each coordinate ATP. Thr11 is a binding site for sn-glycerol 3-phosphate. Arg15 provides a ligand contact to ADP. Residues Arg81, Glu82, Tyr133, and Asp242 each contribute to the sn-glycerol 3-phosphate site. Glycerol contacts are provided by Arg81, Glu82, Tyr133, Asp242, and Gln243. Thr264 and Gly307 together coordinate ADP. Thr264, Gly307, Gln311, and Gly408 together coordinate ATP. 2 residues coordinate ADP: Gly408 and Asn412.

This sequence belongs to the FGGY kinase family.

It carries out the reaction glycerol + ATP = sn-glycerol 3-phosphate + ADP + H(+). The protein operates within polyol metabolism; glycerol degradation via glycerol kinase pathway; sn-glycerol 3-phosphate from glycerol: step 1/1. Its activity is regulated as follows. Inhibited by fructose 1,6-bisphosphate (FBP). Key enzyme in the regulation of glycerol uptake and metabolism. Catalyzes the phosphorylation of glycerol to yield sn-glycerol 3-phosphate. This Trichlorobacter lovleyi (strain ATCC BAA-1151 / DSM 17278 / SZ) (Geobacter lovleyi) protein is Glycerol kinase.